We begin with the raw amino-acid sequence, 870 residues long: Adhesin AWP1 (870 aa).

The signal sequence occupies residues 1–18; the sequence is MSLITIFAFFIKATLVLS. An N-linked (GlcNAc...) asparagine glycan is attached at Asn-224. A disulfide bridge links Cys-284 with Cys-322. Residues 329-835 are disordered; that stretch reads ITPSSSVEPS…TRQTSVIAPG (507 aa). Over residues 331–566 the composition is skewed to low complexity; it reads PSSSVEPSSS…SSSAVVPTSS (236 aa). A compositionally biased stretch (gly residues) spans 567–576; sequence AGGGNGGDNG. Positions 577-641 are enriched in low complexity; sequence QPGADGQPGA…PGAAGQPGAA (65 aa). A compositionally biased stretch (gly residues) spans 642–652; sequence GQPGAGSGGGS. Asn-669 carries N-linked (GlcNAc...) asparagine glycosylation. Residues 675 to 721 are compositionally biased toward gly residues; sequence SGTGNGQAGSGQAGSGQVGSGQAGAGQAGSGQAGAGQAGSGQAGAGQ. 2 stretches are compositionally biased toward polar residues: residues 724–735 and 792–801; these read LDNTASGQSEGG and GSGTDQSSGR.

Its subcellular location is the secreted. It localises to the cell wall. Its function is as follows. May play a role in cell adhesion. In Candida glabrata (strain ATCC 2001 / BCRC 20586 / JCM 3761 / NBRC 0622 / NRRL Y-65 / CBS 138) (Yeast), this protein is Adhesin AWP1.